A 491-amino-acid chain; its full sequence is Argininosuccinate lyase (491 aa).

This sequence belongs to the lyase 1 family. Argininosuccinate lyase subfamily.

It is found in the cytoplasm. It carries out the reaction 2-(N(omega)-L-arginino)succinate = fumarate + L-arginine. The protein operates within amino-acid biosynthesis; L-arginine biosynthesis; L-arginine from L-ornithine and carbamoyl phosphate: step 3/3. The sequence is that of Argininosuccinate lyase from Methanosarcina acetivorans (strain ATCC 35395 / DSM 2834 / JCM 12185 / C2A).